The chain runs to 217 residues: Uridylate kinase (217 aa).

Residue 6–10 (KLSGR) coordinates ATP. Gly-38 is a binding site for UMP. ATP is bound by residues Gly-39 and Arg-43. Residues Asp-60 and 107 to 113 (FQPGQST) contribute to the UMP site. 3 residues coordinate ATP: Asn-134, Tyr-139, and Asp-142.

The protein belongs to the UMP kinase family. In terms of assembly, homohexamer.

Its subcellular location is the cytoplasm. It carries out the reaction UMP + ATP = UDP + ADP. It functions in the pathway pyrimidine metabolism; CTP biosynthesis via de novo pathway; UDP from UMP (UMPK route): step 1/1. Its activity is regulated as follows. Inhibited by UTP. Functionally, catalyzes the reversible phosphorylation of UMP to UDP. This Pyrobaculum islandicum (strain DSM 4184 / JCM 9189 / GEO3) protein is Uridylate kinase.